A 406-amino-acid chain; its full sequence is Putative permease Rv2963 (406 aa).

Helical transmembrane passes span 30–50 (WEIL…QAVV), 67–87 (LVIA…AVAL), 111–131 (LVVE…TAAE), 132–152 (FVGG…FVGA), 208–228 (LAIL…AAWV), 246–266 (AVWG…CSIG), 278–298 (GISF…LPIL), 312–332 (VLLG…ELLF), and 361–381 (VIFL…GGLP).

It belongs to the UPF0718 family.

It localises to the cell membrane. This chain is Putative permease Rv2963, found in Mycobacterium tuberculosis (strain ATCC 25618 / H37Rv).